The primary structure comprises 155 residues: 2-C-methyl-D-erythritol 2,4-cyclodiphosphate synthase (155 aa).

Positions 8 and 10 each coordinate a divalent metal cation. 4-CDP-2-C-methyl-D-erythritol 2-phosphate-binding positions include 8 to 10 (DVH) and 34 to 35 (HS). His-42 lines the a divalent metal cation pocket. 4-CDP-2-C-methyl-D-erythritol 2-phosphate contacts are provided by residues 56–58 (DIG), 61–65 (FPDSD), 100–106 (AQKPKML), 132–135 (TTEE), Phe-139, and Lys-142.

This sequence belongs to the IspF family. Homotrimer. A divalent metal cation is required as a cofactor.

The catalysed reaction is 4-CDP-2-C-methyl-D-erythritol 2-phosphate = 2-C-methyl-D-erythritol 2,4-cyclic diphosphate + CMP. It participates in isoprenoid biosynthesis; isopentenyl diphosphate biosynthesis via DXP pathway; isopentenyl diphosphate from 1-deoxy-D-xylulose 5-phosphate: step 4/6. Involved in the biosynthesis of isopentenyl diphosphate (IPP) and dimethylallyl diphosphate (DMAPP), two major building blocks of isoprenoid compounds. Catalyzes the conversion of 4-diphosphocytidyl-2-C-methyl-D-erythritol 2-phosphate (CDP-ME2P) to 2-C-methyl-D-erythritol 2,4-cyclodiphosphate (ME-CPP) with a corresponding release of cytidine 5-monophosphate (CMP). The polypeptide is 2-C-methyl-D-erythritol 2,4-cyclodiphosphate synthase (Clostridium botulinum (strain ATCC 19397 / Type A)).